We begin with the raw amino-acid sequence, 92 residues long: MAYRGQAQKVQKVMVQPINLIFRYLQNRSRIQVWLYEQVNMRIEGCIIGFDEYMNLVLDDAEEIHSKTKSRKQLGRIMLKGDNITLLQSVSN.

Positions 18 to 92 (INLIFRYLQN…NITLLQSVSN (75 aa)) constitute a Sm domain.

The protein belongs to the snRNP Sm proteins family. In terms of assembly, core component of the spliceosomal U1, U2, U4 and U5 small nuclear ribonucleoproteins (snRNPs), the building blocks of the spliceosome. Most spliceosomal snRNPs contain a common set of Sm proteins, SNRPB, SNRPD1, SNRPD2, SNRPD3, SNRPE, SNRPF and SNRPG that assemble in a heptameric protein ring on the Sm site of the small nuclear RNA to form the core snRNP. Component of the U1 snRNP. The U1 snRNP is composed of the U1 snRNA and the 7 core Sm proteins SNRPB, SNRPD1, SNRPD2, SNRPD3, SNRPE, SNRPF and SNRPG, and at least three U1 snRNP-specific proteins SNRNP70/U1-70K, SNRPA/U1-A and SNRPC/U1-C. Component of the U4/U6-U5 tri-snRNP complex composed of the U4, U6 and U5 snRNAs and at least PRPF3, PRPF4, PRPF6, PRPF8, PRPF31, SNRNP200, TXNL4A, SNRNP40, SNRPB, SNRPD1, SNRPD2, SNRPD3, SNRPE, SNRPF, SNRPG, DDX23, CD2BP2, PPIH, SNU13, EFTUD2, SART1 and USP39, plus LSM2, LSM3, LSM4, LSM5, LSM6, LSM7 and LSM8. Component of the U7 snRNP complex, or U7 Sm protein core complex, that is composed of the U7 snRNA and at least LSM10, LSM11, SNRPB, SNRPD3, SNRPE, SNRPF and SNRPG; the complex does not contain SNRPD1 and SNRPD2. Component of the minor spliceosome, which splices U12-type introns. Part of the SMN-Sm complex that contains SMN1, GEMIN2/SIP1, DDX20/GEMIN3, GEMIN4, GEMIN5, GEMIN6, GEMIN7, GEMIN8, STRAP/UNRIP and the Sm proteins SNRPB, SNRPD1, SNRPD2, SNRPD3, SNRPE, SNRPF and SNRPG; catalyzes core snRNPs assembly. Forms a 6S pICln-Sm complex composed of CLNS1A/pICln, SNRPD1, SNRPD2, SNRPE, SNRPF and SNRPG; ring-like structure where CLNS1A/pICln mimics additional Sm proteins and which is unable to assemble into the core snRNP. Interacts with SMN1; the interaction is direct. Interacts with GEMIN2 (via N-terminus); the interaction is direct. Interacts with SNRPF; the interaction is direct. Interacts with SNRPG; the interaction is direct.

The protein localises to the cytoplasm. The protein resides in the cytosol. It localises to the nucleus. Functionally, plays a role in pre-mRNA splicing as a core component of the spliceosomal U1, U2, U4 and U5 small nuclear ribonucleoproteins (snRNPs), the building blocks of the spliceosome. Component of both the pre-catalytic spliceosome B complex and activated spliceosome C complexes. As a component of the minor spliceosome, involved in the splicing of U12-type introns in pre-mRNAs. As part of the U7 snRNP it is involved in histone 3'-end processing. In Sus scrofa (Pig), this protein is Small nuclear ribonucleoprotein E (SNRPE).